A 361-amino-acid chain; its full sequence is L-threonine 3-dehydrogenase (361 aa).

Cysteine 38 lines the Zn(2+) pocket. Active-site charge relay system residues include threonine 40 and histidine 43. Zn(2+)-binding residues include histidine 63, glutamate 64, cysteine 93, cysteine 96, cysteine 99, and cysteine 107. Residues isoleucine 175, aspartate 195, arginine 200, 262–264 (LGI), and 286–287 (IY) contribute to the NAD(+) site.

It belongs to the zinc-containing alcohol dehydrogenase family. As to quaternary structure, homotetramer. Requires Zn(2+) as cofactor.

The protein resides in the cytoplasm. The enzyme catalyses L-threonine + NAD(+) = (2S)-2-amino-3-oxobutanoate + NADH + H(+). The protein operates within amino-acid degradation; L-threonine degradation via oxydo-reductase pathway; glycine from L-threonine: step 1/2. Catalyzes the NAD(+)-dependent oxidation of L-threonine to 2-amino-3-ketobutyrate. The sequence is that of L-threonine 3-dehydrogenase from Pectobacterium atrosepticum (strain SCRI 1043 / ATCC BAA-672) (Erwinia carotovora subsp. atroseptica).